Reading from the N-terminus, the 1624-residue chain is Pappalysin-1 (1624 aa).

The first 22 residues, Met-1–Ala-22, serve as a signal peptide directing secretion. Positions Glu-23 to Ala-81 are excised as a propeptide. The segment at Val-28 to Ala-93 is disordered. Residues Ala-42 to Ala-51 show a composition bias toward low complexity. 17 disulfides stabilise this stretch: Cys-141-Cys-232, Cys-324-Cys-619, Cys-329-Cys-654, Cys-411-Cys-425, Cys-421-Cys-437, Cys-454-Cys-470, Cys-471-Cys-482, Cys-580-Cys-597, Cys-584-Cys-609, Cys-707-Cys-875, Cys-710-Cys-878, Cys-750-Cys-832, Cys-772-Cys-778, Cys-944-Cys-972, Cys-957-Cys-968, Cys-980-Cys-987, and Cys-996-Cys-1008. The tract at residues Arg-272 to Pro-583 is metalloprotease. N-linked (GlcNAc...) asparagine glycans are attached at residues Asn-387 and Asn-398. An N-linked (GlcNAc...) asparagine glycan is attached at Asn-426. Asn-516 carries an N-linked (GlcNAc...) asparagine glycan. Position 559 (His-559) interacts with Zn(2+). Glu-560 is a catalytic residue. Residues His-563 and His-569 each coordinate Zn(2+). N-linked (GlcNAc...) asparagine glycans are attached at residues Asn-598, Asn-616, and Asn-722. Asn-822 is a glycosylation site (N-linked (GlcNAc...) asparagine). Asn-1023 carries N-linked (GlcNAc...) asparagine glycosylation. 19 disulfides stabilise this stretch: Cys-1033/Cys-1067, Cys-1048/Cys-1136, Cys-1189/Cys-1202, Cys-1212/Cys-1266, Cys-1224/Cys-1235, Cys-1239/Cys-1277, Cys-1282/Cys-1326, Cys-1297/Cys-1307, Cys-1311/Cys-1339, Cys-1343/Cys-1396, Cys-1359/Cys-1370, Cys-1374/Cys-1407, Cys-1412/Cys-1455, Cys-1425/Cys-1435, Cys-1439/Cys-1468, Cys-1475/Cys-1536, Cys-1489/Cys-1499, Cys-1503/Cys-1551, and Cys-1555/Cys-1573. 5 Sushi domains span residues Ala-1210–Pro-1279, Val-1280–Leu-1341, Met-1342–Pro-1409, Val-1410–Glu-1470, and Gly-1473–Lys-1553. N-linked (GlcNAc...) asparagine glycans are attached at residues Asn-1219 and Asn-1223. A glycan (N-linked (GlcNAc...) asparagine) is linked at Asn-1320. Asn-1516 carries an N-linked (GlcNAc...) asparagine glycan.

This sequence belongs to the peptidase M43B family. Homodimer; disulfide-linked. In pregnancy serum, predominantly found as a disulfide-linked 2:2 heterotetramer with the proform of PRG2. Zn(2+) serves as cofactor. Detected in kidney, spleen, brain, ovary, breast, skin, prostate, uterus, and placenta.

The protein resides in the secreted. It catalyses the reaction Cleavage of the 135-Met-|-Lys-136 bond in insulin-like growth factor binding protein (IGFBP)-4, and the 143-Ser-|-Lys-144 bond in IGFBP-5.. In terms of biological role, metalloproteinase which specifically cleaves IGFBP-4 and IGFBP-5, resulting in release of bound IGF. Cleavage of IGFBP-4 is dramatically enhanced by the presence of IGF, whereas cleavage of IGFBP-5 is slightly inhibited by the presence of IGF. Isoform 2 cleaves IGFBP-4 very slowly compared to PAPP-A, but its ability to cleave IGFBP-5 is unaffected. The sequence is that of Pappalysin-1 (Pappa) from Mus musculus (Mouse).